A 792-amino-acid chain; its full sequence is Ribonucleoside-diphosphate reductase large subunit (792 aa).

The 92-residue stretch at 1–92 (MHVIKRDGRQ…VSNLHKEAKK (92 aa)) folds into the ATP-cone domain. ATP is bound by residues 5-6 (KR), 11-17 (ERVMFDK), T53, and D57. An N6-acetyllysine modification is found at K17. Positions 202 and 217 each coordinate GDP. C218 and C444 are oxidised to a cystine. Residues 226 to 228 (DSI), K243, R256, and 263 to 264 (AG) each bind dTTP. Position 376 is an N6-acetyllysine (K376). S427 acts as the Proton acceptor in catalysis. C429 acts as the Cysteine radical intermediate in catalysis. GDP is bound by residues E431 and 604–607 (TAST). Catalysis depends on E431, which acts as the Proton acceptor. T751 bears the Phosphothreonine mark.

It belongs to the ribonucleoside diphosphate reductase large chain family. As to quaternary structure, heterodimer of a large and a small subunit. Interacts with RRM2B. Interacts with AHCYL1 which inhibits its activity.

The protein resides in the cytoplasm. It catalyses the reaction a 2'-deoxyribonucleoside 5'-diphosphate + [thioredoxin]-disulfide + H2O = a ribonucleoside 5'-diphosphate + [thioredoxin]-dithiol. With respect to regulation, under complex allosteric control mediated by deoxynucleoside triphosphates and ATP binding to separate specificity and activation sites on the M1 subunit. The type of nucleotide bound at the specificity site determines substrate preference. It seems probable that ATP makes the enzyme reduce CDP and UDP, dGTP favors ADP reduction and dTTP favors GDP reduction. Stimulated by ATP and inhibited by dATP binding to the activity site, the dATP inhibition is mediated by AHCYL1 which stabilizes dATP in the site. In terms of biological role, provides the precursors necessary for DNA synthesis. Catalyzes the biosynthesis of deoxyribonucleotides from the corresponding ribonucleotides. The protein is Ribonucleoside-diphosphate reductase large subunit (RRM1) of Pongo abelii (Sumatran orangutan).